The primary structure comprises 157 residues: UPF0303 protein NT01EI_1570 (157 aa).

This sequence belongs to the UPF0303 family.

The chain is UPF0303 protein NT01EI_1570 from Edwardsiella ictaluri (strain 93-146).